Reading from the N-terminus, the 735-residue chain is Catalase-peroxidase (735 aa).

Polar residues-rich tracts occupy residues 1 to 10 (MENQNRQNAA) and 17 to 26 (SVTNQSSNRT). The interval 1 to 30 (MENQNRQNAAQCPFHGSVTNQSSNRTTNKD) is disordered. Residues 100–223 (WHSAGTYRIG…LAAVQMGLIY (124 aa)) constitute a cross-link (tryptophyl-tyrosyl-methioninium (Trp-Tyr) (with M-249)). The active-site Proton acceptor is the histidine 101. Residues 223-249 (YVNPEGPDGKPDPKAAARDIRETFRRM) constitute a cross-link (tryptophyl-tyrosyl-methioninium (Tyr-Met) (with W-100)). Histidine 264 contacts heme b.

It belongs to the peroxidase family. Peroxidase/catalase subfamily. Homodimer or homotetramer. Heme b serves as cofactor. Formation of the three residue Trp-Tyr-Met cross-link is important for the catalase, but not the peroxidase activity of the enzyme.

The catalysed reaction is H2O2 + AH2 = A + 2 H2O. It catalyses the reaction 2 H2O2 = O2 + 2 H2O. Bifunctional enzyme with both catalase and broad-spectrum peroxidase activity. Also displays NADH oxidase, INH lyase and isonicotinoyl-NAD synthase activities. This is Catalase-peroxidase from Geobacillus stearothermophilus (Bacillus stearothermophilus).